The following is a 220-amino-acid chain: Elongation factor Ts, chloroplastic (220 aa).

Belongs to the EF-Ts family.

Its subcellular location is the plastid. The protein localises to the chloroplast. Associates with the EF-Tu.GDP complex and induces the exchange of GDP to GTP. It remains bound to the aminoacyl-tRNA.EF-Tu.GTP complex up to the GTP hydrolysis stage on the ribosome. This is Elongation factor Ts, chloroplastic (tsf) from Pyropia yezoensis (Susabi-nori).